Consider the following 81-residue polypeptide: Salivary thrombin inhibitor anophelin (81 aa).

An N-terminal signal peptide occupies residues 1 to 22; that stretch reads MANKLFLISLLCVVLVAKIAQA. Asparagine 45 carries an N-linked (GlcNAc...) asparagine glycan. Positions 70–73 are blocks active site cleft of host thrombin in a reverse direction compared to substrates; sequence DPGR.

The protein belongs to the anophelin family. Interacts with human F2 (thrombin); the interaction results in thrombin inhibition.

Its subcellular location is the secreted. Functionally, salivary protein with anticoagulant activity that inhibits host thrombin (F2). The protein is Salivary thrombin inhibitor anophelin of Anopheles darlingi (Mosquito).